Consider the following 101-residue polypeptide: Small ribosomal subunit protein bS6 (101 aa).

Belongs to the bacterial ribosomal protein bS6 family.

In terms of biological role, binds together with bS18 to 16S ribosomal RNA. The protein is Small ribosomal subunit protein bS6 of Staphylococcus saprophyticus subsp. saprophyticus (strain ATCC 15305 / DSM 20229 / NCIMB 8711 / NCTC 7292 / S-41).